We begin with the raw amino-acid sequence, 119 residues long: Large ribosomal subunit protein uL22c (119 aa).

The protein belongs to the universal ribosomal protein uL22 family. Part of the 50S ribosomal subunit.

The protein resides in the plastid. It localises to the chloroplast. Functionally, this protein binds specifically to 23S rRNA. Its function is as follows. The globular domain of the protein is located near the polypeptide exit tunnel on the outside of the subunit, while an extended beta-hairpin is found that lines the wall of the exit tunnel in the center of the 70S ribosome. The protein is Large ribosomal subunit protein uL22c (rpl22) of Spirogyra maxima (Green alga).